Here is a 687-residue protein sequence, read N- to C-terminus: MKDIFQLVSDYQPAGDQPEAIERLTEGLAAGEMYQTLLGVTGSGKTFTIANMIQQVQRPTIVLAPNKTLAAQLYSEMREFFPRNAVGYFVSYYDYYQPEAYVPASDTYIGKDASVNDHIEQMRLSATKAFLERPDAIVVASVSAIYGLGDKDSYLNMVLHLMVGDTVDHRGILRRLAELQYQRNDRELYRGTYRVRGEIIDIYPAESEQEAIRVELFDDEIESLSYFDPLTGEILHRVSRLTIYPKTHYVTPREVLLQAVDEIKIELAERLEQLYGANKLVEAQRLEQRTRFDIEMILELGYCTGIENYSRFLSRRQPGEAPPTLFDYLPKNALLVIDESHVTVPQLGAMYRGDRARKETLVEYGFRLPSALDNRPLKFEEWEQLAPQTIFVSATPGPYEQQHSGAVIEQVVRPTGLVDPAVEVRPAGSQVDDLLSEIRQRTAADERVLVTVLTKRMAEDLTQYLEQHEVRVRYLHSDIDTVERVEIIRDLRLGKFDVLVGINLLREGLDIPEVSLVAILDADKEGFLRSERSLIQTIGRAARNLHGRAILYGDKVTGSMGRAIAETERRRKKQLAFNETHRIIPRGIQKAVREIIDGVYTPGSGKGHRSPDRVEEKAAEYTRLPPQQLAKRLQQLERQMHKHAQNLEFEQAARLRDEIKRIKGWVFNGADSASAPRQENSQARAIC.

The 389-residue stretch at 26–414 (EGLAAGEMYQ…GAVIEQVVRP (389 aa)) folds into the Helicase ATP-binding domain. Residue 39-46 (GVTGSGKT) coordinates ATP. Positions 92-115 (YYDYYQPEAYVPASDTYIGKDASV) match the Beta-hairpin motif. A Helicase C-terminal domain is found at 430–596 (QVDDLLSEIR…GIQKAVREII (167 aa)). The UVR domain maps to 630-665 (AKRLQQLERQMHKHAQNLEFEQAARLRDEIKRIKGW).

This sequence belongs to the UvrB family. As to quaternary structure, forms a heterotetramer with UvrA during the search for lesions. Interacts with UvrC in an incision complex.

It is found in the cytoplasm. The UvrABC repair system catalyzes the recognition and processing of DNA lesions. A damage recognition complex composed of 2 UvrA and 2 UvrB subunits scans DNA for abnormalities. Upon binding of the UvrA(2)B(2) complex to a putative damaged site, the DNA wraps around one UvrB monomer. DNA wrap is dependent on ATP binding by UvrB and probably causes local melting of the DNA helix, facilitating insertion of UvrB beta-hairpin between the DNA strands. Then UvrB probes one DNA strand for the presence of a lesion. If a lesion is found the UvrA subunits dissociate and the UvrB-DNA preincision complex is formed. This complex is subsequently bound by UvrC and the second UvrB is released. If no lesion is found, the DNA wraps around the other UvrB subunit that will check the other stand for damage. The polypeptide is UvrABC system protein B (Nitrosococcus oceani (strain ATCC 19707 / BCRC 17464 / JCM 30415 / NCIMB 11848 / C-107)).